Consider the following 146-residue polypeptide: Transcriptional regulator MraZ (146 aa).

2 consecutive SpoVT-AbrB domains span residues 7–54 (NATN…GLDL) and 83–126 (GVFV…QPEA).

This sequence belongs to the MraZ family. In terms of assembly, forms oligomers.

The protein localises to the cytoplasm. Its subcellular location is the nucleoid. This chain is Transcriptional regulator MraZ, found in Rhizobium rhizogenes (strain K84 / ATCC BAA-868) (Agrobacterium radiobacter).